Reading from the N-terminus, the 419-residue chain is Serine--tRNA ligase (419 aa).

Thr-226–Glu-228 contributes to the L-serine binding site. ATP-binding positions include Arg-257–Glu-259 and Val-273. Glu-280 provides a ligand contact to L-serine. An ATP-binding site is contributed by Glu-344–Ser-347. Residue Thr-379 coordinates L-serine.

It belongs to the class-II aminoacyl-tRNA synthetase family. Type-1 seryl-tRNA synthetase subfamily. In terms of assembly, homodimer. The tRNA molecule binds across the dimer.

The protein localises to the cytoplasm. It carries out the reaction tRNA(Ser) + L-serine + ATP = L-seryl-tRNA(Ser) + AMP + diphosphate + H(+). The catalysed reaction is tRNA(Sec) + L-serine + ATP = L-seryl-tRNA(Sec) + AMP + diphosphate + H(+). It functions in the pathway aminoacyl-tRNA biosynthesis; selenocysteinyl-tRNA(Sec) biosynthesis; L-seryl-tRNA(Sec) from L-serine and tRNA(Sec): step 1/1. Its function is as follows. Catalyzes the attachment of serine to tRNA(Ser). Is also able to aminoacylate tRNA(Sec) with serine, to form the misacylated tRNA L-seryl-tRNA(Sec), which will be further converted into selenocysteinyl-tRNA(Sec). The protein is Serine--tRNA ligase of Corynebacterium efficiens (strain DSM 44549 / YS-314 / AJ 12310 / JCM 11189 / NBRC 100395).